A 324-amino-acid polypeptide reads, in one-letter code: Glyoxylate/hydroxypyruvate reductase B (324 aa).

Active-site residues include R237 and E266. The Proton donor role is filled by H285.

This sequence belongs to the D-isomer specific 2-hydroxyacid dehydrogenase family. GhrB subfamily. In terms of assembly, homodimer.

It localises to the cytoplasm. It catalyses the reaction glycolate + NADP(+) = glyoxylate + NADPH + H(+). The enzyme catalyses (R)-glycerate + NAD(+) = 3-hydroxypyruvate + NADH + H(+). It carries out the reaction (R)-glycerate + NADP(+) = 3-hydroxypyruvate + NADPH + H(+). In terms of biological role, catalyzes the NADPH-dependent reduction of glyoxylate and hydroxypyruvate into glycolate and glycerate, respectively. This is Glyoxylate/hydroxypyruvate reductase B from Salmonella choleraesuis (strain SC-B67).